The sequence spans 1278 residues: Cytoplasmic FMR1-interacting protein 2 (1278 aa).

K1062 is subject to N6-acetyllysine.

This sequence belongs to the CYFIP family. Component of the WAVE1 complex composed of ABI2, CYFIP2, BRK1, NCKAP1 and WASF1/WAVE1. Interacts with FMR1, FXR1 and FXR2. Interacts with FMR1 isoform 6; the interaction occurs in a RNA-dependent manner. Interacts with RAC1 (activated form) which causes the complex to dissociate, releasing activated WASF1. The complex can also be activated by NCK1. Interacts with SHANK3; the interaction mediates the association of SHANK3 with the WAVE1 complex. Interacts with TMEM108 (via N-terminus); the interaction associates TMEM108 with the WAVE1 complex. In terms of tissue distribution, expressed in T-cells. Increased expression is observed in CD4(+) T-lymphocytes from patients with multiple sclerosis (at protein level).

The protein localises to the cytoplasm. It localises to the nucleus. It is found in the perinuclear region. Its subcellular location is the synapse. The protein resides in the synaptosome. Involved in T-cell adhesion and p53/TP53-dependent induction of apoptosis. Does not bind RNA. As component of the WAVE1 complex, required for BDNF-NTRK2 endocytic trafficking and signaling from early endosomes. The protein is Cytoplasmic FMR1-interacting protein 2 of Homo sapiens (Human).